The chain runs to 368 residues: 2-aminoethylphosphonate--pyruvate transaminase (368 aa).

N6-(pyridoxal phosphate)lysine is present on lysine 192.

The protein belongs to the class-V pyridoxal-phosphate-dependent aminotransferase family. PhnW subfamily. In terms of assembly, homodimer. The cofactor is pyridoxal 5'-phosphate.

The enzyme catalyses (2-aminoethyl)phosphonate + pyruvate = phosphonoacetaldehyde + L-alanine. Involved in phosphonate degradation. This is 2-aminoethylphosphonate--pyruvate transaminase from Pseudomonas putida (strain W619).